The chain runs to 626 residues: Chaperone protein DnaK (626 aa).

Thr-175 is modified (phosphothreonine; by autocatalysis). Disordered regions lie at residues 469–488, 498–517, and 583–626; these read DKGT…GLPK, AEAH…TRNQ, and AQQG…KDNK. Basic and acidic residues predominate over residues 498–516; it reads AEAHEAEDKKRKEDAETRN. Over residues 609–626 the composition is skewed to acidic residues; that stretch reads SDDDVVDAEVVDDDKDNK.

This sequence belongs to the heat shock protein 70 family.

Its function is as follows. Acts as a chaperone. In Bifidobacterium adolescentis (strain ATCC 15703 / DSM 20083 / NCTC 11814 / E194a), this protein is Chaperone protein DnaK.